Consider the following 122-residue polypeptide: Small ribosomal subunit protein uS13 (122 aa).

A disordered region spans residues 97–122 (PVRGQRTHTNAKTRKGRSRLPIAGKK).

Belongs to the universal ribosomal protein uS13 family. In terms of assembly, part of the 30S ribosomal subunit. Forms a loose heterodimer with protein S19. Forms two bridges to the 50S subunit in the 70S ribosome.

Its function is as follows. Located at the top of the head of the 30S subunit, it contacts several helices of the 16S rRNA. In the 70S ribosome it contacts the 23S rRNA (bridge B1a) and protein L5 of the 50S subunit (bridge B1b), connecting the 2 subunits; these bridges are implicated in subunit movement. Contacts the tRNAs in the A and P-sites. The protein is Small ribosomal subunit protein uS13 of Wolbachia pipientis wMel.